Reading from the N-terminus, the 329-residue chain is Acetyl-coenzyme A carboxylase carboxyl transferase subunit alpha (329 aa).

One can recognise a CoA carboxyltransferase C-terminal domain in the interval 40–294; the sequence is QLESLASRRR…RAALERHLGE (255 aa).

It belongs to the AccA family. As to quaternary structure, acetyl-CoA carboxylase is a heterohexamer composed of biotin carboxyl carrier protein (AccB), biotin carboxylase (AccC) and two subunits each of ACCase subunit alpha (AccA) and ACCase subunit beta (AccD).

It is found in the cytoplasm. It carries out the reaction N(6)-carboxybiotinyl-L-lysyl-[protein] + acetyl-CoA = N(6)-biotinyl-L-lysyl-[protein] + malonyl-CoA. It participates in lipid metabolism; malonyl-CoA biosynthesis; malonyl-CoA from acetyl-CoA: step 1/1. In terms of biological role, component of the acetyl coenzyme A carboxylase (ACC) complex. First, biotin carboxylase catalyzes the carboxylation of biotin on its carrier protein (BCCP) and then the CO(2) group is transferred by the carboxyltransferase to acetyl-CoA to form malonyl-CoA. In Synechococcus sp. (strain CC9902), this protein is Acetyl-coenzyme A carboxylase carboxyl transferase subunit alpha.